Reading from the N-terminus, the 341-residue chain is ATP-dependent 6-phosphofructokinase 2 (341 aa).

ATP contacts are provided by residues G10, 72–73, and 102–105; these read RL and GEGT. Mg(2+) is bound at residue E103. Substrate contacts are provided by residues 125–127, R162, 169–171, E222, K266, and 272–275; these read TID, MGR, and HVQR. The Proton acceptor role is filled by D127.

Belongs to the phosphofructokinase type A (PFKA) family. Mixed-substrate PFK group III subfamily. Homodimer or homotetramer. The cofactor is Mg(2+).

Its subcellular location is the cytoplasm. It catalyses the reaction beta-D-fructose 6-phosphate + ATP = beta-D-fructose 1,6-bisphosphate + ADP + H(+). Its pathway is carbohydrate degradation; glycolysis; D-glyceraldehyde 3-phosphate and glycerone phosphate from D-glucose: step 3/4. With respect to regulation, allosterically inhibited by phosphoenolpyruvate. In terms of biological role, catalyzes the phosphorylation of D-fructose 6-phosphate to fructose 1,6-bisphosphate by ATP, the first committing step of glycolysis. This is ATP-dependent 6-phosphofructokinase 2 from Streptomyces coelicolor (strain ATCC BAA-471 / A3(2) / M145).